Reading from the N-terminus, the 523-residue chain is Chitinase Chi52 (523 aa).

A signal peptide spans 1–30 (MNQAVRFRPVITFALAFLLLITWFAPRADA). Residues 80–101 (GSGGETPTPDTAPPSVPAGLTS) are disordered. A Fibronectin type-III domain is found at 95–180 (VPAGLTSSSI…TSLSVTTSNG (86 aa)). The region spanning 190–513 (KWLIGYWHNF…SAHRPFLNGL (324 aa)) is the GH18 domain. E302 functions as the Proton donor in the catalytic mechanism.

It belongs to the glycosyl hydrolase 18 family. Chitinase class II subfamily.

The enzyme catalyses Random endo-hydrolysis of N-acetyl-beta-D-glucosaminide (1-&gt;4)-beta-linkages in chitin and chitodextrins.. Activity is inhibited by Cu(2+) and Co(2+), and almost completely inhibited by SDS. Acidic chitinase that displays a broad substrate specificity, showing the highest specific activity toward colloidal chitin, followed by ethylene glycol chitin and ball milled chitin, but exhibits no activity toward powdery chitin and chitosan. Hydrolyzes colloidal chitin and chitooligosaccharides with degree of polymerization 2-5 to release mainly N-acetyl chitobiose. Displays inhibition effects on the growth of some phytopathogenic fungi, including Alternaria alstroemeriae, Botrytis cinerea, Rhizoctonia solani, Sclerotinia sclerotiorum and Valsa mali. The polypeptide is Chitinase Chi52 (Paenibacillus xylanexedens).